The sequence spans 208 residues: Translation initiation factor 6 (208 aa).

This sequence belongs to the eIF-6 family.

Its function is as follows. Binds to the 50S ribosomal subunit and prevents its association with the 30S ribosomal subunit to form the 70S initiation complex. This chain is Translation initiation factor 6 (eif6), found in Nanoarchaeum equitans (strain Kin4-M).